A 393-amino-acid polypeptide reads, in one-letter code: Elongation factor Tu (393 aa).

The 194-residue stretch at 10–203 folds into the tr-type G domain; the sequence is KPHVNIGTIG…AVDSYIPQPV (194 aa). The G1 stretch occupies residues 19 to 26; the sequence is GHVDHGKT. 19–26 serves as a coordination point for GTP; the sequence is GHVDHGKT. T26 is a Mg(2+) binding site. Residues 60–64 form a G2 region; sequence GITIS. A G3 region spans residues 81-84; it reads DCPG. GTP contacts are provided by residues 81–85 and 136–139; these read DCPGH and NKVD. A G4 region spans residues 136 to 139; it reads NKVD. Positions 173–175 are G5; sequence SAL.

It belongs to the TRAFAC class translation factor GTPase superfamily. Classic translation factor GTPase family. EF-Tu/EF-1A subfamily. In terms of assembly, monomer.

It localises to the cytoplasm. It carries out the reaction GTP + H2O = GDP + phosphate + H(+). Functionally, GTP hydrolase that promotes the GTP-dependent binding of aminoacyl-tRNA to the A-site of ribosomes during protein biosynthesis. This Chlorobaculum tepidum (strain ATCC 49652 / DSM 12025 / NBRC 103806 / TLS) (Chlorobium tepidum) protein is Elongation factor Tu.